Here is a 54-residue protein sequence, read N- to C-terminus: UPF0391 membrane protein Oant_1245 (54 aa).

2 helical membrane passes run 5–25 (ALVF…GIAG) and 29–48 (GIAQ…SLIA).

Belongs to the UPF0391 family.

It localises to the cell membrane. This Brucella anthropi (strain ATCC 49188 / DSM 6882 / CCUG 24695 / JCM 21032 / LMG 3331 / NBRC 15819 / NCTC 12168 / Alc 37) (Ochrobactrum anthropi) protein is UPF0391 membrane protein Oant_1245.